Consider the following 76-residue polypeptide: Omega-scoloptoxin(13)-Ssm2a (76 aa).

A signal peptide spans 1-22; it reads MAYIYALIFAIVVCMNTDVIQA.

In terms of processing, contains 4 disulfide bonds. In terms of tissue distribution, expressed by the venom gland.

It is found in the secreted. Its function is as follows. Inhibits voltage-gated calcium channel (Cav) currents in DRG neurons (IC(50)=1590 nM). The sequence is that of Omega-scoloptoxin(13)-Ssm2a from Scolopendra mutilans (Chinese red-headed centipede).